Reading from the N-terminus, the 500-residue chain is Lysine--tRNA ligase (500 aa).

Residues E411 and E418 each coordinate Mg(2+).

The protein belongs to the class-II aminoacyl-tRNA synthetase family. As to quaternary structure, homodimer. Mg(2+) is required as a cofactor.

The protein localises to the cytoplasm. The catalysed reaction is tRNA(Lys) + L-lysine + ATP = L-lysyl-tRNA(Lys) + AMP + diphosphate. The polypeptide is Lysine--tRNA ligase (Azoarcus sp. (strain BH72)).